The primary structure comprises 426 residues: Protein FAM181B (426 aa).

Disordered stretches follow at residues 106 to 157 (GLMG…AAAA) and 226 to 246 (NLPP…CGPS). Over residues 128 to 141 (PLAAPSAPTVAAPA) the composition is skewed to low complexity.

It belongs to the FAM181 family.

The sequence is that of Protein FAM181B (FAM181B) from Homo sapiens (Human).